The sequence spans 262 residues: Purine nucleoside phosphorylase SSP1584 (262 aa).

H79, C124, and H141 together coordinate Zn(2+).

Belongs to the purine nucleoside phosphorylase YfiH/LACC1 family. Homodimer. The cofactor is Cu(2+). Zn(2+) serves as cofactor.

It carries out the reaction adenosine + phosphate = alpha-D-ribose 1-phosphate + adenine. The catalysed reaction is S-methyl-5'-thioadenosine + phosphate = 5-(methylsulfanyl)-alpha-D-ribose 1-phosphate + adenine. It catalyses the reaction inosine + phosphate = alpha-D-ribose 1-phosphate + hypoxanthine. The enzyme catalyses adenosine + H2O + H(+) = inosine + NH4(+). Purine nucleoside enzyme that catalyzes the phosphorolysis of adenosine and inosine nucleosides, yielding D-ribose 1-phosphate and the respective free bases, adenine and hypoxanthine. Also catalyzes the phosphorolysis of S-methyl-5'-thioadenosine into adenine and S-methyl-5-thio-alpha-D-ribose 1-phosphate. Also has adenosine deaminase activity. In Staphylococcus saprophyticus subsp. saprophyticus (strain ATCC 15305 / DSM 20229 / NCIMB 8711 / NCTC 7292 / S-41), this protein is Purine nucleoside phosphorylase SSP1584.